The sequence spans 186 residues: Large ribosomal subunit protein uL5m (186 aa).

Belongs to the universal ribosomal protein uL5 family.

The protein localises to the mitochondrion. The protein is Large ribosomal subunit protein uL5m (RPL5) of Solanum tuberosum (Potato).